A 421-amino-acid polypeptide reads, in one-letter code: MSSILVEGGKSLRGEINISGAKNAALPIIVASLLSSKTLVINNVPQLSDVSDMLFILKSCGVHVEIVGSGTIALTANNISGHFSPPCNIVKKMRASIWILAPLLLRLGQVRIASPGGCAIGQRRIDLHLAALKAFGANIQLEDDYISANCSSRMHGISFKFDKVSVGATITAIMCAVLANGSTKLANCAQEPEIADLCYCLRKMGANITGIGTANISIIGVKELNGANYSIIPDRIEAGTYMVAAAITQGKIKLNNVIFKHLKSAITKLRLSGAIIQYQNENSLIIEGANIIKPLNIQTNPYPKFPTDLQAQFMSLMSIADGVSIITENIYENRYMHVFELIKMGANIVIQSREAVVTGVKKLHGADVIATDLRASVSLVLAGLSAVGITKVKRMHHLDRGYESLVEKLQNCNARVQRIPD.

22–23 (KN) serves as a coordination point for phosphoenolpyruvate. Arginine 94 lines the UDP-N-acetyl-alpha-D-glucosamine pocket. Cysteine 118 acts as the Proton donor in catalysis. Cysteine 118 carries the 2-(S-cysteinyl)pyruvic acid O-phosphothioketal modification. UDP-N-acetyl-alpha-D-glucosamine-binding positions include 163–166 (KVSV), aspartate 308, and isoleucine 330.

Belongs to the EPSP synthase family. MurA subfamily.

Its subcellular location is the cytoplasm. It carries out the reaction phosphoenolpyruvate + UDP-N-acetyl-alpha-D-glucosamine = UDP-N-acetyl-3-O-(1-carboxyvinyl)-alpha-D-glucosamine + phosphate. The protein operates within cell wall biogenesis; peptidoglycan biosynthesis. Functionally, cell wall formation. Adds enolpyruvyl to UDP-N-acetylglucosamine. The protein is UDP-N-acetylglucosamine 1-carboxyvinyltransferase of Orientia tsutsugamushi (strain Boryong) (Rickettsia tsutsugamushi).